Reading from the N-terminus, the 538-residue chain is Transmembrane protein 266 (538 aa).

At 1 to 102 (MALVTSFNMA…VFLLSASLNS (102 aa)) the chain is on the cytoplasmic side. The helical transmembrane segment at 103 to 123 (FLVACVILVVILLTLELLIDT) threads the bilayer. The Extracellular portion of the chain corresponds to 124–130 (KLLQFSN). A helical transmembrane segment spans residues 131–151 (AFQFAGVIHWISLVILSVFFS). At 152-169 (ETVLRIVVLGIWDYIENK) the chain is on the cytoplasmic side. A helical transmembrane segment spans residues 170-190 (IEVFDGAVIILSLAPMVASTV). The Extracellular segment spans residues 191 to 199 (ANGPRSPWD). A helical membrane pass occupies residues 200-220 (AISLIIMFRIWRVKRVIDAYV). Residues 221-538 (LPVKLEMEMV…EPKLHTVPEA (318 aa)) lie on the Cytoplasmic side of the membrane. Positions 232–278 (QQYEKAKAIQDEQLERLTQICQEQGFEIRQLRAHLAQQDLDLAAERE) form a coiled coil. Disordered regions lie at residues 380–435 (NSTC…PLPL) and 453–483 (SSLS…VQTS). The span at 381 to 396 (STCASATSETTSHSTC) shows a compositional bias: low complexity. Polar residues predominate over residues 397 to 417 (GSVTRAQSASSQTLGSSTDCS). Residues 425–434 (PSKPRSSPLP) are compositionally biased toward low complexity.

As to quaternary structure, homodimer; disulfide-linked. In brain, present in the granule layer of the cerebellar cortex. Localizes on the post-synaptic side of glutamatergic mossy fibers and granule cells in the cerebellum (at protein level). As to expression, predominantly expressed in granule cells in cerebellum (at protein level).

Its subcellular location is the cell projection. The protein resides in the dendrite. The protein localises to the perikaryon. It is found in the cell membrane. Functionally, voltage-sensor protein present on the post-synaptic side of glutamatergic mossy fibers and granule cells in the cerebellum. Despite the presence of a voltage-sensor segment, does not form a functional ion channel and its precise role remains unclear. Undergoes both rapid and slow structural rearrangements in response to changes in voltage. Contains a zinc-binding site that can regulate the slow conformational transition. This Mus musculus (Mouse) protein is Transmembrane protein 266.